A 213-amino-acid chain; its full sequence is Thiamine-phosphate synthase (213 aa).

4-amino-2-methyl-5-(diphosphooxymethyl)pyrimidine contacts are provided by residues 40 to 44 and N72; that span reads QYRDK. Residues D73 and D91 each contribute to the Mg(2+) site. T110 lines the 4-amino-2-methyl-5-(diphosphooxymethyl)pyrimidine pocket. 137-139 contributes to the 2-[(2R,5Z)-2-carboxy-4-methylthiazol-5(2H)-ylidene]ethyl phosphate binding site; that stretch reads SHT. K140 serves as a coordination point for 4-amino-2-methyl-5-(diphosphooxymethyl)pyrimidine. G167 is a 2-[(2R,5Z)-2-carboxy-4-methylthiazol-5(2H)-ylidene]ethyl phosphate binding site.

The protein belongs to the thiamine-phosphate synthase family. Mg(2+) serves as cofactor.

The catalysed reaction is 2-[(2R,5Z)-2-carboxy-4-methylthiazol-5(2H)-ylidene]ethyl phosphate + 4-amino-2-methyl-5-(diphosphooxymethyl)pyrimidine + 2 H(+) = thiamine phosphate + CO2 + diphosphate. It catalyses the reaction 2-(2-carboxy-4-methylthiazol-5-yl)ethyl phosphate + 4-amino-2-methyl-5-(diphosphooxymethyl)pyrimidine + 2 H(+) = thiamine phosphate + CO2 + diphosphate. It carries out the reaction 4-methyl-5-(2-phosphooxyethyl)-thiazole + 4-amino-2-methyl-5-(diphosphooxymethyl)pyrimidine + H(+) = thiamine phosphate + diphosphate. Its pathway is cofactor biosynthesis; thiamine diphosphate biosynthesis; thiamine phosphate from 4-amino-2-methyl-5-diphosphomethylpyrimidine and 4-methyl-5-(2-phosphoethyl)-thiazole: step 1/1. In terms of biological role, condenses 4-methyl-5-(beta-hydroxyethyl)thiazole monophosphate (THZ-P) and 2-methyl-4-amino-5-hydroxymethyl pyrimidine pyrophosphate (HMP-PP) to form thiamine monophosphate (TMP). In Stutzerimonas stutzeri (strain A1501) (Pseudomonas stutzeri), this protein is Thiamine-phosphate synthase.